The chain runs to 570 residues: MNRDQALLNRLWSRVLLEELSRLGVTQVCVAPGSRSTPLTLEANANTAFTLHTHYDERGLGFMALGLAKASQQPVAVIVTSGTAVANLLPAIAESKLTGERLVVLTADRPLELVGCGANQAIVQSGIFSSHVTASLELPSPAIHHPLSWLLTSIDEVMARQALLGGSVHINCPFPEPLYSAGDEAIYQPYLQPVQRWREQARPYTQVHQGLVQSVPAAIDGLLTKGVVIVGSLSLQEAQAAKRFAKAMGWPLLCDPQSGISSQWAHFDLWLQHPKAREQLNQAQCVVQFGSRIVSKRLLQWLEAWCATGLGEYHYIAPHSARNNPWHAMQQQWVCEISHWVDAVLSKRLAGQHTQQGWADELTHYAQSVRQLAQLHFSSSSLSEVALALDLTERATQADLFLGNSLIVRLVDIFSALDGREVFSNRGASGIDGLVATASGVQRARQKPLLMLLGDTSLLYDLNSLALMRNPAQPTVIVVTNNDGGAIFDLLPVPSEQREALYQMPHGMDFAHAASQFGLAYCAAQTLEHYQTLVEEHFAHGAGTLLIEVKTPPQQASMHIKQLTSQLHAL.

This sequence belongs to the TPP enzyme family. MenD subfamily. In terms of assembly, homodimer. Mg(2+) is required as a cofactor. Requires Mn(2+) as cofactor. Thiamine diphosphate serves as cofactor.

It catalyses the reaction isochorismate + 2-oxoglutarate + H(+) = 5-enolpyruvoyl-6-hydroxy-2-succinyl-cyclohex-3-ene-1-carboxylate + CO2. It functions in the pathway quinol/quinone metabolism; 1,4-dihydroxy-2-naphthoate biosynthesis; 1,4-dihydroxy-2-naphthoate from chorismate: step 2/7. The protein operates within quinol/quinone metabolism; menaquinone biosynthesis. Functionally, catalyzes the thiamine diphosphate-dependent decarboxylation of 2-oxoglutarate and the subsequent addition of the resulting succinic semialdehyde-thiamine pyrophosphate anion to isochorismate to yield 2-succinyl-5-enolpyruvyl-6-hydroxy-3-cyclohexene-1-carboxylate (SEPHCHC). This Vibrio cholerae serotype O1 (strain ATCC 39541 / Classical Ogawa 395 / O395) protein is 2-succinyl-5-enolpyruvyl-6-hydroxy-3-cyclohexene-1-carboxylate synthase.